The sequence spans 453 residues: MKFSAVILAAGKGTRMHSNMPKVLHTLAGKPMVKHVIDTCTGLGAQNIHLVFGHGGDQMQTTLADETVNWILQADQLGTGHAVDQASPRFEDDEKILVLYGDVPLISPETIENLLDAQPTGGIALLTVMLDNPTGYGRIIRKNGPVVAIVEQKDASEEQKQIKEINTGVMVATGGDLKRWLSGLNNNNAQGEYYLTDVIAAAHDEGRAVEAVHPVNAIEVEGVNDRAQLARLERAFQSMQAQKLLEQGVMLRDPARFDLRGELQCGMDCEIDANVIIEGNVSLGDNVIIGTGCVLKDCEIDDNTIVRPYSVIEGATVGEECTVGPFTRLRPGAELRNDAHVGNFVEVKNARIGEGSKANHLTYLGDAEIGQRTNIGAGTITCNYDGANKFKTIIGNDVFVGSDSQLVAPVTIADGATIGAGTTLTKDVEEGELVITRVKERKITGWQRPVKQK.

The segment at 1–226 (MKFSAVILAA…AIEVEGVNDR (226 aa)) is pyrophosphorylase. Residues 8 to 11 (LAAG), K22, Q73, 78 to 79 (GT), 100 to 102 (YGD), G137, E151, N166, and N224 contribute to the UDP-N-acetyl-alpha-D-glucosamine site. D102 contributes to the Mg(2+) binding site. N224 contributes to the Mg(2+) binding site. Residues 227 to 247 (AQLARLERAFQSMQAQKLLEQ) are linker. The N-acetyltransferase stretch occupies residues 248–453 (GVMLRDPARF…TGWQRPVKQK (206 aa)). UDP-N-acetyl-alpha-D-glucosamine-binding residues include R330 and K348. The active-site Proton acceptor is H360. UDP-N-acetyl-alpha-D-glucosamine-binding residues include Y363 and N374. Acetyl-CoA-binding positions include A377, 383-384 (NY), S402, A420, and R437.

In the N-terminal section; belongs to the N-acetylglucosamine-1-phosphate uridyltransferase family. The protein in the C-terminal section; belongs to the transferase hexapeptide repeat family. In terms of assembly, homotrimer. The cofactor is Mg(2+).

It localises to the cytoplasm. It carries out the reaction alpha-D-glucosamine 1-phosphate + acetyl-CoA = N-acetyl-alpha-D-glucosamine 1-phosphate + CoA + H(+). The enzyme catalyses N-acetyl-alpha-D-glucosamine 1-phosphate + UTP + H(+) = UDP-N-acetyl-alpha-D-glucosamine + diphosphate. The protein operates within nucleotide-sugar biosynthesis; UDP-N-acetyl-alpha-D-glucosamine biosynthesis; N-acetyl-alpha-D-glucosamine 1-phosphate from alpha-D-glucosamine 6-phosphate (route II): step 2/2. It participates in nucleotide-sugar biosynthesis; UDP-N-acetyl-alpha-D-glucosamine biosynthesis; UDP-N-acetyl-alpha-D-glucosamine from N-acetyl-alpha-D-glucosamine 1-phosphate: step 1/1. Its pathway is bacterial outer membrane biogenesis; LPS lipid A biosynthesis. In terms of biological role, catalyzes the last two sequential reactions in the de novo biosynthetic pathway for UDP-N-acetylglucosamine (UDP-GlcNAc). The C-terminal domain catalyzes the transfer of acetyl group from acetyl coenzyme A to glucosamine-1-phosphate (GlcN-1-P) to produce N-acetylglucosamine-1-phosphate (GlcNAc-1-P), which is converted into UDP-GlcNAc by the transfer of uridine 5-monophosphate (from uridine 5-triphosphate), a reaction catalyzed by the N-terminal domain. The sequence is that of Bifunctional protein GlmU from Vibrio parahaemolyticus serotype O3:K6 (strain RIMD 2210633).